Consider the following 364-residue polypeptide: tRNA-specific 2-thiouridylase MnmA 2 (364 aa).

ATP is bound by residues 10–17 (GMSGGVDS) and Met36. The active-site Nucleophile is Cys106. Cys106 and Cys204 are disulfide-bonded. Residue Gly130 participates in ATP binding. The interval 154–156 (KDQ) is interaction with tRNA. Catalysis depends on Cys204, which acts as the Cysteine persulfide intermediate. The interaction with tRNA stretch occupies residues 310 to 311 (RY).

It belongs to the MnmA/TRMU family.

The protein resides in the cytoplasm. The enzyme catalyses S-sulfanyl-L-cysteinyl-[protein] + uridine(34) in tRNA + AH2 + ATP = 2-thiouridine(34) in tRNA + L-cysteinyl-[protein] + A + AMP + diphosphate + H(+). Catalyzes the 2-thiolation of uridine at the wobble position (U34) of tRNA, leading to the formation of s(2)U34. This is tRNA-specific 2-thiouridylase MnmA 2 from Caldanaerobacter subterraneus subsp. tengcongensis (strain DSM 15242 / JCM 11007 / NBRC 100824 / MB4) (Thermoanaerobacter tengcongensis).